The primary structure comprises 317 residues: Pantothenate kinase (317 aa).

95-102 (GSVAVGKS) lines the ATP pocket.

This sequence belongs to the prokaryotic pantothenate kinase family.

Its subcellular location is the cytoplasm. It carries out the reaction (R)-pantothenate + ATP = (R)-4'-phosphopantothenate + ADP + H(+). It functions in the pathway cofactor biosynthesis; coenzyme A biosynthesis; CoA from (R)-pantothenate: step 1/5. The protein is Pantothenate kinase of Rhodopseudomonas palustris (strain BisB18).